Reading from the N-terminus, the 696-residue chain is Interleukin-1 receptor accessory protein-like 1 (696 aa).

A signal peptide spans 1–24 (MKAPIPHLILLYATFTQSLKVVTK). One can recognise an Ig-like C2-type 1 domain in the interval 25–134 (RGSADGCTDW…YCMKVSISLT (110 aa)). Residues 25-357 (RGSADGCTDW…LLHKRELMYT (333 aa)) are Extracellular-facing. Intrachain disulfides connect Cys-31/Cys-126 and Cys-53/Cys-118. Residues Asn-63, Asn-122, and Asn-138 are each glycosylated (N-linked (GlcNAc...) asparagine). 2 disulfide bridges follow: Cys-143-Cys-185 and Cys-164-Cys-216. Ig-like C2-type domains are found at residues 143-232 (CYNS…TELT) and 242-350 (PKLL…VLLH). N-linked (GlcNAc...) asparagine glycosylation is found at Asn-213, Asn-264, and Asn-331. Cys-267 and Cys-334 form a disulfide bridge. Residues 358–378 (VELAGGLGAILLLLVCSVTIY) traverse the membrane as a helical segment. The Cytoplasmic segment spans residues 379–696 (KCYKIEIMLF…RETSISSVIW (318 aa)). The TIR domain maps to 403–559 (KDYDAYLSYT…KFWKRLQYEM (157 aa)). Glu-491 is an active-site residue. The interval 549–644 (SKFWKRLQYE…TGTLPLTSIG (96 aa)) is interaction with NCS1. Positions 659-680 (GQRPQTKSSREPNPDEAHTNSA) are disordered. Over residues 666 to 676 (SSREPNPDEAH) the composition is skewed to basic and acidic residues.

The protein belongs to the interleukin-1 receptor family. In terms of assembly, homodimer. Interacts (calcium-independent) with NCS1/FREQ. Interacts (via the first immunoglobilin domain) with PTPRD (via the second immunoglobilin domain); this interaction is PTPRD-splicing-dependent and induces pre- and post-synaptic differentiation of neurons and is required for IL1RAPL1-mediated synapse formation.

It is found in the cell membrane. It localises to the cytoplasm. Its subcellular location is the cell projection. The protein resides in the axon. The protein localises to the dendrite. It catalyses the reaction NAD(+) + H2O = ADP-D-ribose + nicotinamide + H(+). In terms of biological role, may regulate secretion and presynaptic differentiation through inhibition of the activity of N-type voltage-gated calcium channel. May activate the MAP kinase JNK. Plays a role in neurite outgrowth. During dendritic spine formation can bidirectionally induce pre- and post-synaptic differentiation of neurons by trans-synaptically binding to PTPRD. The polypeptide is Interleukin-1 receptor accessory protein-like 1 (Il1rapl1) (Rattus norvegicus (Rat)).